Consider the following 156-residue polypeptide: Transcription elongation factor GreA (156 aa).

The stretch at 45 to 66 forms a coiled coil; the sequence is NAEYHSAKEKQSFIEGRIKELE.

Belongs to the GreA/GreB family.

Necessary for efficient RNA polymerase transcription elongation past template-encoded arresting sites. The arresting sites in DNA have the property of trapping a certain fraction of elongating RNA polymerases that pass through, resulting in locked ternary complexes. Cleavage of the nascent transcript by cleavage factors such as GreA or GreB allows the resumption of elongation from the new 3'terminus. GreA releases sequences of 2 to 3 nucleotides. The sequence is that of Transcription elongation factor GreA from Jannaschia sp. (strain CCS1).